The sequence spans 693 residues: Protein-glutamine gamma-glutamyltransferase E (693 aa).

Tyr111 is modified (phosphotyrosine). Thr112 carries the post-translational modification Phosphothreonine. Ca(2+) is bound by residues Ala222, Asn225, Asn227, Asp228, and Asn230. The active site involves Cys273. The Ca(2+) site is built by Asp302, Asp304, Asn306, Ser308, and Asp325. Residues His331 and Asp354 contribute to the active site. Ca(2+)-binding residues include Asn394, Thr416, Glu444, and Glu449. The tract at residues 457 to 483 (LDKLKPNASFGATSSRNPEGEDKEPSI) is disordered.

This sequence belongs to the transglutaminase superfamily. Transglutaminase family. In terms of assembly, consists of two polypeptide chains, which are synthesized as a precursor form of a single polypeptide. Ca(2+) serves as cofactor. Post-translationally, activated by proteolytic processing. In vitro activation is commonly achieved by cleavage with dispase, a neutral bacterial protease. Physiological activation may be catalyzed by CTSL and, to a lesser extent, by CTSS. In terms of tissue distribution, expressed in skin and stomach and, at lower levels, in testis, kidney and spleen (at protein level). On the basis of its catalytic activity, detected in the epidermis, around the granular and spinous layers but not in the outermost cornified layers. In hair follicles, mainly located in the medulla and the hair cortex.

It is found in the cytoplasm. It catalyses the reaction L-glutaminyl-[protein] + L-lysyl-[protein] = [protein]-L-lysyl-N(6)-5-L-glutamyl-[protein] + NH4(+). Functionally, catalyzes the calcium-dependent formation of isopeptide cross-links between glutamine and lysine residues in various proteins, as well as the conjugation of polyamines to proteins. Involved in the formation of the cornified envelope (CE), a specialized component consisting of covalent cross-links of proteins beneath the plasma membrane of terminally differentiated keratinocytes. Catalyzes small proline-rich proteins (SPRR1 and SPRR2) and LOR cross-linking to form small interchain oligomers, which are further cross-linked by TGM1 onto the growing CE scaffold. In hair follicles, involved in cross-linking structural proteins to hardening the inner root sheath. In Mus musculus (Mouse), this protein is Protein-glutamine gamma-glutamyltransferase E (Tgm3).